The sequence spans 324 residues: Glyoxylate/hydroxypyruvate reductase B (324 aa).

Residues Arg-237 and Glu-266 contribute to the active site. His-285 (proton donor) is an active-site residue.

Belongs to the D-isomer specific 2-hydroxyacid dehydrogenase family. GhrB subfamily. As to quaternary structure, homodimer.

Its subcellular location is the cytoplasm. It catalyses the reaction glycolate + NADP(+) = glyoxylate + NADPH + H(+). It carries out the reaction (R)-glycerate + NAD(+) = 3-hydroxypyruvate + NADH + H(+). The catalysed reaction is (R)-glycerate + NADP(+) = 3-hydroxypyruvate + NADPH + H(+). Catalyzes the NADPH-dependent reduction of glyoxylate and hydroxypyruvate into glycolate and glycerate, respectively. This Shigella flexneri serotype 5b (strain 8401) protein is Glyoxylate/hydroxypyruvate reductase B.